The sequence spans 689 residues: DNA ligase (689 aa).

NAD(+) contacts are provided by residues 58 to 62, 107 to 108, and Glu-138; these read DQEYD and SL. Residue Lys-140 is the N6-AMP-lysine intermediate of the active site. NAD(+) contacts are provided by Arg-161, Glu-198, Lys-314, and Lys-338. Positions 432, 435, 448, and 453 each coordinate Zn(2+). The BRCT domain occupies 611–689; that stretch reads ASSGTLSGKT…QELLEMLHGG (79 aa).

This sequence belongs to the NAD-dependent DNA ligase family. LigA subfamily. It depends on Mg(2+) as a cofactor. Mn(2+) serves as cofactor.

The enzyme catalyses NAD(+) + (deoxyribonucleotide)n-3'-hydroxyl + 5'-phospho-(deoxyribonucleotide)m = (deoxyribonucleotide)n+m + AMP + beta-nicotinamide D-nucleotide.. Its function is as follows. DNA ligase that catalyzes the formation of phosphodiester linkages between 5'-phosphoryl and 3'-hydroxyl groups in double-stranded DNA using NAD as a coenzyme and as the energy source for the reaction. It is essential for DNA replication and repair of damaged DNA. This Methylacidiphilum infernorum (isolate V4) (Methylokorus infernorum (strain V4)) protein is DNA ligase.